The following is a 100-amino-acid chain: Large ribosomal subunit protein uL23 (100 aa).

This sequence belongs to the universal ribosomal protein uL23 family. Part of the 50S ribosomal subunit. Contacts protein L29, and trigger factor when it is bound to the ribosome.

Its function is as follows. One of the early assembly proteins it binds 23S rRNA. One of the proteins that surrounds the polypeptide exit tunnel on the outside of the ribosome. Forms the main docking site for trigger factor binding to the ribosome. The polypeptide is Large ribosomal subunit protein uL23 (Xylella fastidiosa (strain M23)).